We begin with the raw amino-acid sequence, 118 residues long: Ribonuclease P protein component (118 aa).

The protein belongs to the RnpA family. Consists of a catalytic RNA component (M1 or rnpB) and a protein subunit.

It carries out the reaction Endonucleolytic cleavage of RNA, removing 5'-extranucleotides from tRNA precursor.. Functionally, RNaseP catalyzes the removal of the 5'-leader sequence from pre-tRNA to produce the mature 5'-terminus. It can also cleave other RNA substrates such as 4.5S RNA. The protein component plays an auxiliary but essential role in vivo by binding to the 5'-leader sequence and broadening the substrate specificity of the ribozyme. The chain is Ribonuclease P protein component from Rickettsia akari (strain Hartford).